Reading from the N-terminus, the 409-residue chain is Peptidase T (409 aa).

His-78 serves as a coordination point for Zn(2+). Residue Asp-80 is part of the active site. Asp-140 is a Zn(2+) binding site. Catalysis depends on Glu-173, which acts as the Proton acceptor. Residues Glu-174, Asp-196, and His-379 each coordinate Zn(2+).

The protein belongs to the peptidase M20B family. Requires Zn(2+) as cofactor.

It localises to the cytoplasm. The enzyme catalyses Release of the N-terminal residue from a tripeptide.. Cleaves the N-terminal amino acid of tripeptides. This is Peptidase T from Escherichia coli O139:H28 (strain E24377A / ETEC).